The sequence spans 366 residues: Cytochrome c peroxidase, mitochondrial (366 aa).

The transit peptide at M1 to Y46 directs the protein to the mitochondrion. H127 serves as the catalytic Proton acceptor. Position 250 (H250) interacts with heme b. The Tryptophan radical intermediate role is filled by W266.

Belongs to the peroxidase family. Cytochrome c peroxidase subfamily. As to quaternary structure, forms a one-to-one complex with cytochrome c. Heme b serves as cofactor.

The protein localises to the mitochondrion matrix. It is found in the mitochondrion intermembrane space. It catalyses the reaction 2 Fe(II)-[cytochrome c] + H2O2 + 2 H(+) = 2 Fe(III)-[cytochrome c] + 2 H2O. Its function is as follows. Destroys radicals which are normally produced within the cells and which are toxic to biological systems. This is Cytochrome c peroxidase, mitochondrial (ccp1) from Aspergillus fumigatus (strain ATCC MYA-4609 / CBS 101355 / FGSC A1100 / Af293) (Neosartorya fumigata).